A 371-amino-acid chain; its full sequence is N-acetyldiaminopimelate deacetylase (371 aa).

D68 is a catalytic residue. The active-site Proton acceptor is the E127.

It belongs to the peptidase M20A family. N-acetyldiaminopimelate deacetylase subfamily.

It carries out the reaction N-acetyl-(2S,6S)-2,6-diaminopimelate + H2O = (2S,6S)-2,6-diaminopimelate + acetate. The protein operates within amino-acid biosynthesis; L-lysine biosynthesis via DAP pathway; LL-2,6-diaminopimelate from (S)-tetrahydrodipicolinate (acetylase route): step 3/3. Functionally, catalyzes the conversion of N-acetyl-diaminopimelate to diaminopimelate and acetate. The polypeptide is N-acetyldiaminopimelate deacetylase (Listeria welshimeri serovar 6b (strain ATCC 35897 / DSM 20650 / CCUG 15529 / CIP 8149 / NCTC 11857 / SLCC 5334 / V8)).